Reading from the N-terminus, the 272-residue chain is LDMGHMVNNIKQIDEFVNLGSNAIETDVSFDKKANPEYTYHGTPCDCGRDCLRWEYFNDFVKALRTATTPGNSKYDKLFLVVFDLKTSSLYDYQASEAGTKLAKNLLQHYWNNGNNGGRAYIILSIPNLKHYKLITGFQQTLKDEGHAELLDKVGYDFSGNDDIGDVQKTYEKAGVTGHVWQSDGITNCLLRGFTRINAAVANRDSANGIINKVYYWTVDKRQTTRDTLDANVDGIMTNYPDITVEILNEDAYKKKFRIATYEDNPWETFKE.

The active site involves H5. Residues E25 and D27 each coordinate Mg(2+). Residue H41 is the Nucleophile of the active site. 2 cysteine pairs are disulfide-bonded: C45–C51 and C47–C189. D84 is a Mg(2+) binding site.

This sequence belongs to the arthropod phospholipase D family. Class II subfamily. Requires Mg(2+) as cofactor. In terms of tissue distribution, expressed by the venom gland.

The protein resides in the secreted. The catalysed reaction is an N-(acyl)-sphingosylphosphocholine = an N-(acyl)-sphingosyl-1,3-cyclic phosphate + choline. It carries out the reaction an N-(acyl)-sphingosylphosphoethanolamine = an N-(acyl)-sphingosyl-1,3-cyclic phosphate + ethanolamine. The enzyme catalyses a 1-acyl-sn-glycero-3-phosphocholine = a 1-acyl-sn-glycero-2,3-cyclic phosphate + choline. It catalyses the reaction a 1-acyl-sn-glycero-3-phosphoethanolamine = a 1-acyl-sn-glycero-2,3-cyclic phosphate + ethanolamine. Dermonecrotic toxins cleave the phosphodiester linkage between the phosphate and headgroup of certain phospholipids (sphingolipid and lysolipid substrates), forming an alcohol (often choline) and a cyclic phosphate. This toxin acts on sphingomyelin (SM). It may also act on ceramide phosphoethanolamine (CPE), lysophosphatidylcholine (LPC) and lysophosphatidylethanolamine (LPE), but not on lysophosphatidylserine (LPS), and lysophosphatidylglycerol (LPG). It acts by transphosphatidylation, releasing exclusively cyclic phosphate products as second products. Induces dermonecrosis, hemolysis, increased vascular permeability, edema, inflammatory response, and platelet aggregation. The protein is Dermonecrotic toxin LvSicTox-alphaIC1biv of Loxosceles variegata (Recluse spider).